Consider the following 715-residue polypeptide: Fatty acid oxidation complex subunit alpha (715 aa).

Residues 1–190 (MIYEGKAITV…KVGAVDAVVA (190 aa)) form an enoyl-CoA hydratase/isomerase region. D297 is a binding site for substrate. Residues 312 to 715 (KDVKQAAVLG…MAKNGQSFFG (404 aa)) form a 3-hydroxyacyl-CoA dehydrogenase region. NAD(+) is bound by residues M325, D344, 401 to 403 (VVE), K408, and S430. The For 3-hydroxyacyl-CoA dehydrogenase activity role is filled by H451. An NAD(+)-binding site is contributed by N454. Substrate is bound by residues N501 and Y660.

This sequence in the N-terminal section; belongs to the enoyl-CoA hydratase/isomerase family. In the C-terminal section; belongs to the 3-hydroxyacyl-CoA dehydrogenase family. Heterotetramer of two alpha chains (FadB) and two beta chains (FadA).

It catalyses the reaction a (3S)-3-hydroxyacyl-CoA + NAD(+) = a 3-oxoacyl-CoA + NADH + H(+). The catalysed reaction is a (3S)-3-hydroxyacyl-CoA = a (2E)-enoyl-CoA + H2O. The enzyme catalyses a 4-saturated-(3S)-3-hydroxyacyl-CoA = a (3E)-enoyl-CoA + H2O. It carries out the reaction (3S)-3-hydroxybutanoyl-CoA = (3R)-3-hydroxybutanoyl-CoA. It catalyses the reaction a (3Z)-enoyl-CoA = a 4-saturated (2E)-enoyl-CoA. The catalysed reaction is a (3E)-enoyl-CoA = a 4-saturated (2E)-enoyl-CoA. Its pathway is lipid metabolism; fatty acid beta-oxidation. Involved in the aerobic and anaerobic degradation of long-chain fatty acids via beta-oxidation cycle. Catalyzes the formation of 3-oxoacyl-CoA from enoyl-CoA via L-3-hydroxyacyl-CoA. It can also use D-3-hydroxyacyl-CoA and cis-3-enoyl-CoA as substrate. This chain is Fatty acid oxidation complex subunit alpha, found in Pseudomonas fluorescens (strain Pf0-1).